The primary structure comprises 136 residues: Group 1 truncated hemoglobin GlbN (136 aa).

His81 contributes to the heme binding site.

Belongs to the truncated hemoglobin family. Group I subfamily. In terms of assembly, homodimer. It depends on heme as a cofactor.

In terms of biological role, binds oxygen cooperatively with very high affinity because of a fast combination and a slow dissociation rate. The sequence is that of Group 1 truncated hemoglobin GlbN (glbN) from Mycolicibacterium paratuberculosis (strain ATCC BAA-968 / K-10) (Mycobacterium paratuberculosis).